A 685-amino-acid chain; its full sequence is Mannan-binding lectin serine protease 2 (685 aa).

The N-terminal stretch at 1–19 is a signal peptide; sequence MRLLIFLGLLWSLVATLLG. A CUB 1 domain is found at 20–137; sequence SKWPEPVFGR…TGFEAFYAAE (118 aa). Residues Glu-67 and Asp-75 each coordinate Ca(2+). An intrachain disulfide couples Cys-72 to Cys-90. Asn-103 carries an N-linked (GlcNAc...) asparagine glycan. 5 residues coordinate Ca(2+): Asp-120, Ser-122, Asn-123, Asp-138, and Glu-141. An EGF-like; calcium-binding domain is found at 138–181; that stretch reads DVDECRVSLGDSVPCDHYCHNYLGGYYCSCRAGYVLHQNKHTCS. 5 disulfides stabilise this stretch: Cys-142-Cys-156, Cys-152-Cys-165, Cys-167-Cys-180, Cys-184-Cys-211, and Cys-241-Cys-259. Residues Asn-158 and Gly-162 each contribute to the Ca(2+) site. (3R)-3-hydroxyasparagine is present on Asn-158. Residues 184-296 enclose the CUB 2 domain; it reads CSGQVFTGRS…TGWKIHYTST (113 aa). N-linked (GlcNAc...) asparagine glycans are attached at residues Asn-285 and Asn-308. Sushi domains follow at residues 298–363 and 364–431; these read RPCP…ECSI and IDCG…VCEP. Disulfide bonds link Cys-300–Cys-348, Cys-328–Cys-361, Cys-366–Cys-411, Cys-396–Cys-429, Cys-433–Cys-552, Cys-598–Cys-617, and Cys-628–Cys-659. Positions 444–683 constitute a Peptidase S1 domain; that stretch reads IVGGQPAKPG…YIPWIENIIS (240 aa). Residues His-483 and Asp-532 each act as charge relay system in the active site. Residue Asn-545 is glycosylated (N-linked (GlcNAc...) asparagine). Catalysis depends on Ser-632, which acts as the Charge relay system. The N-linked (GlcNAc...) asparagine glycan is linked to Asn-641.

It belongs to the peptidase S1 family. In terms of assembly, homodimer; disulfide-linked. Binds MBL2. Isoform 2 binds to MASP1. Binds SERPING1. In terms of processing, the iron and 2-oxoglutarate dependent 3-hydroxylation of aspartate and asparagine is (R) stereospecific within EGF domains. In terms of tissue distribution, plasma.

The protein localises to the secreted. The enzyme catalyses Selective cleavage after Arg-223 in complement component C2 (-Ser-Leu-Gly-Arg-|-Lys-Ile-Gln-Ile) and after Arg-76 in complement component C4 (-Gly-Leu-Gln-Arg-|-Ala-Leu-Glu-Ile).. Functionally, serum protease that plays an important role in the activation of the complement system via mannose-binding lectin. After activation by auto-catalytic cleavage it cleaves C2 and C4, leading to their activation and to the formation of C3 convertase. The polypeptide is Mannan-binding lectin serine protease 2 (Masp2) (Mus musculus (Mouse)).